We begin with the raw amino-acid sequence, 200 residues long: Inducible T-cell costimulator (200 aa).

A signal peptide spans 1-20 (MKPYFSCVFVFCFLIKLLTG). Over 21–145 (ELNDLANHRM…LCCQLKLWLP (125 aa)) the chain is Extracellular. Positions 30–133 (MFSFHDGGVQ…LSGGYLLIYE (104 aa)) constitute an Ig-like V-type domain. 2 disulfide bridges follow: Cys42–Cys109 and Cys63–Cys83. N-linked (GlcNAc...) asparagine glycosylation is found at Asn89 and Asn123. A helical transmembrane segment spans residues 146 to 166 (VGCAAFVAALLFGCIFIVWFA). Residues 167 to 200 (KKKYRSSVHDPNSEYMFMAAVNTNKKSRLAGMTS) are Cytoplasmic-facing.

In terms of assembly, homodimer; disulfide-linked. Interacts with ICOSLG. Interacts with PIK3R1. Interacts with TBK1; this interaction is critical for the maturation of T follicular regulatory cells. N-glycosylated. In terms of tissue distribution, strongly expressed in the spleen and lung. Lower expression seen in liver, kidney and testis.

The protein resides in the cell membrane. In terms of biological role, stimulatory receptor expressed in activated or antigen-experienced T-cells that plays an important role in the immune response. Upon binding to its ligand ICOSL expressed on antigen presenting cells (APCs), delivers costimulatory signals that enhances all basic T-cell responses to a foreign antigen, namely proliferation, secretion of lymphokines including IL10, up-regulation of molecules that mediate cell-cell interaction, and effective help for antibody secretion by B-cells. Also acts as a costimulatory receptor critical for the differentiation of T follicular regulatory cells upon immune challenges such as viral infection. Mechanistically, potentiates TCR-induced calcium flux by augmenting PLCG1 activation and actin remodeling. In addition, activates PI3K signaling pathways independently of calcium flux. Essential both for efficient interaction between T and B-cells and for normal antibody responses to T-cell dependent antigens. Prevents the apoptosis of pre-activated T-cells. Plays a critical role in CD40-mediated class switching of immunoglobin isotypes. The protein is Inducible T-cell costimulator (Icos) of Rattus norvegicus (Rat).